Here is a 207-residue protein sequence, read N- to C-terminus: Thiamine-phosphate synthase (207 aa).

4-amino-2-methyl-5-(diphosphooxymethyl)pyrimidine is bound by residues 35–39 and Asn-67; that span reads QYRDK. Residues Asp-68 and Asp-86 each contribute to the Mg(2+) site. Thr-105 is a 4-amino-2-methyl-5-(diphosphooxymethyl)pyrimidine binding site. 132-134 is a 2-[(2R,5Z)-2-carboxy-4-methylthiazol-5(2H)-ylidene]ethyl phosphate binding site; sequence SVT. Lys-135 lines the 4-amino-2-methyl-5-(diphosphooxymethyl)pyrimidine pocket. Gly-162 is a binding site for 2-[(2R,5Z)-2-carboxy-4-methylthiazol-5(2H)-ylidene]ethyl phosphate.

It belongs to the thiamine-phosphate synthase family. The cofactor is Mg(2+).

It catalyses the reaction 2-[(2R,5Z)-2-carboxy-4-methylthiazol-5(2H)-ylidene]ethyl phosphate + 4-amino-2-methyl-5-(diphosphooxymethyl)pyrimidine + 2 H(+) = thiamine phosphate + CO2 + diphosphate. It carries out the reaction 2-(2-carboxy-4-methylthiazol-5-yl)ethyl phosphate + 4-amino-2-methyl-5-(diphosphooxymethyl)pyrimidine + 2 H(+) = thiamine phosphate + CO2 + diphosphate. The enzyme catalyses 4-methyl-5-(2-phosphooxyethyl)-thiazole + 4-amino-2-methyl-5-(diphosphooxymethyl)pyrimidine + H(+) = thiamine phosphate + diphosphate. The protein operates within cofactor biosynthesis; thiamine diphosphate biosynthesis; thiamine phosphate from 4-amino-2-methyl-5-diphosphomethylpyrimidine and 4-methyl-5-(2-phosphoethyl)-thiazole: step 1/1. Condenses 4-methyl-5-(beta-hydroxyethyl)thiazole monophosphate (THZ-P) and 2-methyl-4-amino-5-hydroxymethyl pyrimidine pyrophosphate (HMP-PP) to form thiamine monophosphate (TMP). In Pseudomonas putida (strain ATCC 700007 / DSM 6899 / JCM 31910 / BCRC 17059 / LMG 24140 / F1), this protein is Thiamine-phosphate synthase.